The sequence spans 546 residues: CTP synthase (546 aa).

The amidoligase domain stretch occupies residues 1-269 (MNPNTKIIFV…DAKLVELLNL (269 aa)). A CTP-binding site is contributed by S16. S16 contributes to the UTP binding site. Residues 17–22 (SLGKGV) and D74 each bind ATP. Mg(2+) is bound by residues D74 and E143. CTP-binding positions include 150 to 152 (DIE), 190 to 195 (KTKPTQ), and K226. Residues 190-195 (KTKPTQ) and K226 each bind UTP. The Glutamine amidotransferase type-1 domain maps to 294–546 (TIAMVGKYVS…IHAAVEKSNK (253 aa)). G356 contributes to the L-glutamine binding site. C383 serves as the catalytic Nucleophile; for glutamine hydrolysis. L-glutamine-binding positions include 384–387 (LGMQ), E407, and R474. Catalysis depends on residues H519 and E521.

Belongs to the CTP synthase family. In terms of assembly, homotetramer.

The catalysed reaction is UTP + L-glutamine + ATP + H2O = CTP + L-glutamate + ADP + phosphate + 2 H(+). It catalyses the reaction L-glutamine + H2O = L-glutamate + NH4(+). It carries out the reaction UTP + NH4(+) + ATP = CTP + ADP + phosphate + 2 H(+). Its pathway is pyrimidine metabolism; CTP biosynthesis via de novo pathway; CTP from UDP: step 2/2. Its activity is regulated as follows. Allosterically activated by GTP, when glutamine is the substrate; GTP has no effect on the reaction when ammonia is the substrate. The allosteric effector GTP functions by stabilizing the protein conformation that binds the tetrahedral intermediate(s) formed during glutamine hydrolysis. Inhibited by the product CTP, via allosteric rather than competitive inhibition. Catalyzes the ATP-dependent amination of UTP to CTP with either L-glutamine or ammonia as the source of nitrogen. Regulates intracellular CTP levels through interactions with the four ribonucleotide triphosphates. This is CTP synthase from Francisella philomiragia subsp. philomiragia (strain ATCC 25017 / CCUG 19701 / FSC 153 / O#319-036).